Reading from the N-terminus, the 214-residue chain is 3-isopropylmalate dehydratase small subunit (214 aa).

This sequence belongs to the LeuD family. LeuD type 1 subfamily. Heterodimer of LeuC and LeuD.

The enzyme catalyses (2R,3S)-3-isopropylmalate = (2S)-2-isopropylmalate. It participates in amino-acid biosynthesis; L-leucine biosynthesis; L-leucine from 3-methyl-2-oxobutanoate: step 2/4. Catalyzes the isomerization between 2-isopropylmalate and 3-isopropylmalate, via the formation of 2-isopropylmaleate. The polypeptide is 3-isopropylmalate dehydratase small subunit (Pseudomonas putida (strain ATCC 47054 / DSM 6125 / CFBP 8728 / NCIMB 11950 / KT2440)).